Here is a 71-residue protein sequence, read N- to C-terminus: Conotoxin Bu25 (71 aa).

The N-terminal stretch at 1-21 (MGMRMMVTVFPLVVLATTVVS) is a signal peptide. A propeptide spanning residues 22–44 (LRSNRASDGRRGIVNKLNDLVPK) is cleaved from the precursor. At Arg70 the chain carries Arginine amide.

Belongs to the conotoxin A superfamily. In terms of processing, contains 3 disulfide bonds. They are not indicated here, since framework IV presents two different connectivities (I-V, II-III, IV-VI and I-III, II-V, IV-VI). As to expression, expressed by the venom duct.

Its subcellular location is the secreted. In Conus bullatus (Bubble cone), this protein is Conotoxin Bu25.